A 179-amino-acid polypeptide reads, in one-letter code: ATP-dependent protease subunit HslV (179 aa).

Thr-7 is an active-site residue. Gly-162, Cys-165, and Thr-168 together coordinate Na(+).

It belongs to the peptidase T1B family. HslV subfamily. A double ring-shaped homohexamer of HslV is capped on each side by a ring-shaped HslU homohexamer. The assembly of the HslU/HslV complex is dependent on binding of ATP.

Its subcellular location is the cytoplasm. The catalysed reaction is ATP-dependent cleavage of peptide bonds with broad specificity.. With respect to regulation, allosterically activated by HslU binding. Protease subunit of a proteasome-like degradation complex believed to be a general protein degrading machinery. This is ATP-dependent protease subunit HslV from Aromatoleum aromaticum (strain DSM 19018 / LMG 30748 / EbN1) (Azoarcus sp. (strain EbN1)).